We begin with the raw amino-acid sequence, 204 residues long: Elongation factor Ts (204 aa).

Residues 80 to 83 form an involved in Mg(2+) ion dislocation from EF-Tu region; the sequence is TDFV.

Belongs to the EF-Ts family.

The protein localises to the cytoplasm. In terms of biological role, associates with the EF-Tu.GDP complex and induces the exchange of GDP to GTP. It remains bound to the aminoacyl-tRNA.EF-Tu.GTP complex up to the GTP hydrolysis stage on the ribosome. The sequence is that of Elongation factor Ts from Caldicellulosiruptor saccharolyticus (strain ATCC 43494 / DSM 8903 / Tp8T 6331).